Reading from the N-terminus, the 527-residue chain is uncharacterized protein (527 aa).

This is an uncharacterized protein from Schizosaccharomyces pombe (strain 972 / ATCC 24843) (Fission yeast).